A 202-amino-acid chain; its full sequence is Putative pre-16S rRNA nuclease (202 aa).

Disordered stretches follow at residues 1 to 27 (MSGS…GVRI) and 170 to 202 (GCAA…SDER). Residues 9 to 20 (GDSRPGDSRPGD) are compositionally biased toward basic and acidic residues.

Belongs to the YqgF nuclease family.

Its subcellular location is the cytoplasm. Could be a nuclease involved in processing of the 5'-end of pre-16S rRNA. The sequence is that of Putative pre-16S rRNA nuclease from Frankia casuarinae (strain DSM 45818 / CECT 9043 / HFP020203 / CcI3).